The chain runs to 1375 residues: DNA-directed RNA polymerase subunit beta (1375 aa).

The protein belongs to the RNA polymerase beta chain family. In terms of assembly, the RNAP catalytic core consists of 2 alpha, 1 beta, 1 beta' and 1 omega subunit. When a sigma factor is associated with the core the holoenzyme is formed, which can initiate transcription.

The enzyme catalyses RNA(n) + a ribonucleoside 5'-triphosphate = RNA(n+1) + diphosphate. DNA-dependent RNA polymerase catalyzes the transcription of DNA into RNA using the four ribonucleoside triphosphates as substrates. This Oleidesulfovibrio alaskensis (strain ATCC BAA-1058 / DSM 17464 / G20) (Desulfovibrio alaskensis) protein is DNA-directed RNA polymerase subunit beta.